Reading from the N-terminus, the 281-residue chain is 2-dehydro-3-deoxyphosphooctonate aldolase (281 aa).

This sequence belongs to the KdsA family.

The protein resides in the cytoplasm. The catalysed reaction is D-arabinose 5-phosphate + phosphoenolpyruvate + H2O = 3-deoxy-alpha-D-manno-2-octulosonate-8-phosphate + phosphate. The protein operates within carbohydrate biosynthesis; 3-deoxy-D-manno-octulosonate biosynthesis; 3-deoxy-D-manno-octulosonate from D-ribulose 5-phosphate: step 2/3. It functions in the pathway bacterial outer membrane biogenesis; lipopolysaccharide biosynthesis. In Janthinobacterium sp. (strain Marseille) (Minibacterium massiliensis), this protein is 2-dehydro-3-deoxyphosphooctonate aldolase.